The chain runs to 282 residues: Undecaprenyl-diphosphatase (282 aa).

Helical transmembrane passes span 90-110 (YRLGWYVIIGTIPICILGLFF), 121-141 (LWVVVTALVVFSGVIALAEYV), 194-214 (FGFLLAIPAVFASGLFSLPDA), 228-248 (QLLVATLIAFVLGLTAVAWLL), and 256-276 (MYWFVGYRVLVGTGMLVLLAT).

This sequence belongs to the UppP family.

Its subcellular location is the cell membrane. It carries out the reaction di-trans,octa-cis-undecaprenyl diphosphate + H2O = di-trans,octa-cis-undecaprenyl phosphate + phosphate + H(+). Its function is as follows. Catalyzes the dephosphorylation of undecaprenyl diphosphate (UPP). Confers resistance to bacitracin. The protein is Undecaprenyl-diphosphatase of Mycobacterium tuberculosis (strain ATCC 25618 / H37Rv).